Here is a 655-residue protein sequence, read N- to C-terminus: p-hydroxybenzoic acid efflux pump subunit AaeB (655 aa).

A run of 11 helical transmembrane segments spans residues 13-33 (FAVK…HFQL), 38-58 (WAVL…GGEP), 69-89 (LRII…ISMI), 93-113 (LLMI…SSLV), 121-141 (WGLS…EPLL), 152-172 (EIVI…PRSI), 370-390 (LFWL…IAVV), 407-427 (FIYG…VIIP), 431-451 (QSML…GIEV), 459-479 (MGAL…TFHF), and 482-502 (FLDS…VILL).

It belongs to the aromatic acid exporter ArAE (TC 2.A.85) family.

The protein localises to the cell inner membrane. Forms an efflux pump with AaeA. Could function as a metabolic relief valve, allowing to eliminate certain compounds when they accumulate to high levels in the cell. The chain is p-hydroxybenzoic acid efflux pump subunit AaeB from Salmonella heidelberg (strain SL476).